A 2137-amino-acid chain; its full sequence is Pecanex-like protein 2 (2137 aa).

The next 2 helical transmembrane spans lie at 34–54 and 57–77; these read CHLY…LAFP and AIIV…IKLV. Disordered stretches follow at residues 92–163, 225–251, 402–530, and 545–572; these read QQKP…LELS, NGKG…VDKG, EKTS…HARV, and SAEI…QMPN. A compositionally biased stretch (basic and acidic residues) spans 96–114; the sequence is SRKEEKPNKDKEAKGEHIT. The span at 116 to 125 shows a compositional bias: polar residues; sequence HRNPSNNRQI. A glycan (N-linked (GlcNAc...) asparagine) is linked at Asn136. The span at 146 to 156 shows a compositional bias: polar residues; sequence SRGQSITSHHS. A glycan (N-linked (GlcNAc...) asparagine) is linked at Asn449. Residues 479–490 show a composition bias toward basic and acidic residues; that stretch reads IKDHSSSSREPW. Polar residues predominate over residues 510–520; it reads GQTNLDPSSCK. Asn550, Asn572, Asn587, Asn598, and Asn613 each carry an N-linked (GlcNAc...) asparagine glycan. Residues 593–602 show a composition bias toward polar residues; it reads ASSQLNGSAE. The disordered stretch occupies residues 593–612; sequence ASSQLNGSAEQNEESGLLRD. Disordered regions lie at residues 621–655 and 740–763; these read EILE…CTQP and AREM…SGDP. Residues 630-655 show a composition bias toward polar residues; that stretch reads GHSSKQGKPDLQSQDHTSTGPACTQP. Residues 746–760 show a composition bias toward low complexity; that stretch reads SSSSTTTSESQDPSS. The next 13 helical transmembrane spans lie at 844 to 864, 868 to 888, 901 to 921, 952 to 972, 983 to 1003, 1029 to 1049, 1099 to 1119, 1124 to 1144, 1193 to 1213, 1237 to 1257, 1265 to 1285, 1302 to 1322, and 1324 to 1344; these read LAIL…SQGF, MWVL…LKSV, QIIT…ILLL, YLIV…FPQI, IDML…VYSV, HIPA…YHLS, LIVC…TVFL, FLSI…HYVL, YILY…LISN, SFCN…FFHF, SFLL…DLLH, GSSF…MLFF, and TIAT…VIFI. N-linked (GlcNAc...) asparagine glycans are attached at residues Asn1412, Asn1553, and Asn1818. The disordered stretch occupies residues 1876–1958; that stretch reads RQHSGGNIED…RPPMLSSSGP (83 aa). 3 stretches are compositionally biased toward polar residues: residues 1901-1910, 1920-1929, and 1937-1958; these read SGGSQESSAE, GVSSCEGTQR, and SQSV…SSGP. A glycan (N-linked (GlcNAc...) asparagine) is linked at Asn2054.

It belongs to the pecanex family.

It localises to the membrane. May play a role in tumorigenesis of colorectal carcinomas with high microsatellite instability (MSI-H). This Homo sapiens (Human) protein is Pecanex-like protein 2.